Reading from the N-terminus, the 248-residue chain is PF03932 family protein CutC (248 aa).

Belongs to the CutC family. Homodimer.

It localises to the cytoplasm. This is PF03932 family protein CutC from Escherichia coli O81 (strain ED1a).